The following is a 731-amino-acid chain: E3 ubiquitin-protein ligase SMURF1 (731 aa).

The C2 domain maps to Met-1 to Lys-120. Ser-200 bears the Phosphoserine mark. Residues Glu-216 to Pro-237 form a disordered region. 2 consecutive WW domains span residues Pro-234–Ile-267 and Gly-280–Leu-313. Glycyl lysine isopeptide (Lys-Gly) (interchain with G-Cter in ubiquitin) cross-links involve residues Lys-355 and Lys-357. The HECT domain occupies Arg-394–Glu-731. The Glycyl thioester intermediate role is filled by Cys-699.

As to quaternary structure, interacts with TRAF4. Interacts (via HECT domain) with FBXL15 (via LRR repeats). Interacts with SMAD7 and TGFBR1; SMAD7 recruits SMURF1 to TGFBR1 and regulates TGF-beta receptor degradation. Interacts with MAVS; the interaction is mediated by NDFIP1. Auto-ubiquitinated in presence of NDFIP1. Ubiquitinated by the SCF(FBXL15) complex at Lys-355 and Lys-357, leading to its degradation by the proteasome. Lys-357 is the primary ubiquitination site.

The protein resides in the cytoplasm. The protein localises to the cell membrane. The catalysed reaction is S-ubiquitinyl-[E2 ubiquitin-conjugating enzyme]-L-cysteine + [acceptor protein]-L-lysine = [E2 ubiquitin-conjugating enzyme]-L-cysteine + N(6)-ubiquitinyl-[acceptor protein]-L-lysine.. It participates in protein modification; protein ubiquitination. E3 ubiquitin-protein ligase that acts as a negative regulator of BMP signaling pathway. Mediates ubiquitination and degradation of SMAD1 and SMAD5, 2 receptor-regulated SMADs specific for the BMP pathway. Promotes ubiquitination and subsequent proteasomal degradation of TRAF family members and RHOA. Promotes ubiquitination and subsequent proteasomal degradation of MAVS. Acts as an antagonist of TGF-beta signaling by ubiquitinating TGFBR1 and targeting it for degradation. Plays a role in dendrite formation by melanocytes. This Mus musculus (Mouse) protein is E3 ubiquitin-protein ligase SMURF1 (Smurf1).